A 149-amino-acid chain; its full sequence is Large ribosomal subunit protein bL9 (149 aa).

An N6-acetyllysine modification is found at lysine 89.

This sequence belongs to the bacterial ribosomal protein bL9 family.

In terms of biological role, binds to the 23S rRNA. This chain is Large ribosomal subunit protein bL9, found in Shigella boydii serotype 18 (strain CDC 3083-94 / BS512).